The chain runs to 524 residues: Methyl-CpG-binding domain-containing protein 8 (524 aa).

Positions 45-60 (CSSLSPSSSASLAASA) are enriched in low complexity. The tract at residues 45–151 (CSSLSPSSSA…EEELEDNEGQ (107 aa)) is disordered. Polar residues predominate over residues 75–84 (FNESAGSRKQ). A compositionally biased stretch (basic and acidic residues) spans 106–116 (RQRDDSSREEQ). The span at 136-149 (EEEDEGEEELEDNE) shows a compositional bias: acidic residues. Positions 334 to 406 (VVNACDYGGY…QHYYLQSDNK (73 aa)) constitute an MBD domain.

In terms of tissue distribution, expressed in shoot meristems, roots (vasculature and tips), hypocotyls (vasculature), cotyledons (vasculature and hydathodes), young leaves, buds, flowers and stems. Detected in stomata.

It localises to the nucleus. Functionally, probable transcriptional regulator. May regulates developmental traits such as flowering time. In Arabidopsis thaliana (Mouse-ear cress), this protein is Methyl-CpG-binding domain-containing protein 8 (MBD8).